A 350-amino-acid polypeptide reads, in one-letter code: Probable transposase-like protein At4g04430 (350 aa).

Disordered stretches follow at residues 1–57 and 307–328; these read MPSD…PSVN and QIGQANPNEPPVSAAPEPQVAN. Residues 30–43 are compositionally biased toward low complexity; that stretch reads SGVQGSGSRSGSTV.

Belongs to the transposase 24 family.

This is Probable transposase-like protein At4g04430 from Arabidopsis thaliana (Mouse-ear cress).